The sequence spans 354 residues: Inactive ADP-ribosyltransferase ARH2 (354 aa).

Position 27 is a phosphoserine (Ser-27).

This sequence belongs to the ADP-ribosylglycohydrolase family.

It localises to the cytoplasm. The protein localises to the myofibril. The protein resides in the sarcomere. Its function is as follows. Required for myofibril assembly and outgrowth of the cardiac chambers in the developing heart. Appears to be catalytically inactive, showing no activity against O-acetyl-ADP-ribose. The chain is Inactive ADP-ribosyltransferase ARH2 (ADPRHL1) from Bos taurus (Bovine).